The primary structure comprises 93 residues: UPF0175 protein AF_0100 (93 aa).

This sequence belongs to the UPF0175 family.

This chain is UPF0175 protein AF_0100, found in Archaeoglobus fulgidus (strain ATCC 49558 / DSM 4304 / JCM 9628 / NBRC 100126 / VC-16).